The following is a 474-amino-acid chain: Polyamine oxidase 7 (474 aa).

The N-terminal stretch at 1 to 27 (MTKPTTMAIFLSIVLLSMAQLPSLVAG) is a signal peptide. 2 residues coordinate FAD: E61 and R69. 2 N-linked (GlcNAc...) asparagine glycosylation sites follow: N103 and N150. An FAD-binding site is contributed by V261. A glycan (N-linked (GlcNAc...) asparagine) is linked at N278. Residue E454 participates in FAD binding.

It belongs to the flavin monoamine oxidase family. It depends on FAD as a cofactor.

The protein localises to the secreted. The protein resides in the extracellular space. Its subcellular location is the apoplast. It carries out the reaction spermine + O2 + H2O = 3-aminopropanal + spermidine + H2O2. It catalyses the reaction N(1)-acetylspermine + O2 + H2O = 3-acetamidopropanal + spermidine + H2O2. The enzyme catalyses norspermine + O2 + H2O = norspermidine + 3-aminopropanal + H2O2. The catalysed reaction is spermidine + O2 + H2O = 3-aminopropanal + putrescine + H2O2. It carries out the reaction N(1)-acetylspermidine + O2 + H2O = 3-acetamidopropanal + putrescine + H2O2. It catalyses the reaction thermospermine + O2 + H2O = 3-aminopropanal + spermidine + H2O2. Its pathway is amine and polyamine degradation; spermidine degradation. The protein operates within amine and polyamine degradation; spermine degradation. In terms of biological role, flavoenzyme involved in polyamine back-conversion. Catalyzes the oxidation of the secondary amino group of polyamines, such as spermine, spermidine and their acetyl derivatives. Substrate preference is spermine &gt; spermidine &gt; N(1)-acetylspermine &gt; N(1)-acetylspermidine &gt; norspermine &gt; thermospermine. No activity detected when putrescine is used as substrate. May play a role in producing hydrogen peroxide for secondary wall thickening through lignin formation during anther development. The sequence is that of Polyamine oxidase 7 from Oryza sativa subsp. japonica (Rice).